A 261-amino-acid polypeptide reads, in one-letter code: Thioredoxin-like protein HCF164, chloroplastic (261 aa).

The N-terminal 40 residues, 1–40 (MARLVFSLNLPSSHGFNLSPRNLQSFFVTQTGAPRFRAVR), are a transit peptide targeting the chloroplast. Residues 39–91 (VRCKPNPESSETKQEKLVIDNGETSSASKEVESSSSVADSSSSSSSGFPESPN) form a disordered region. Residues 63–84 (SSASKEVESSSSVADSSSSSSS) show a composition bias toward low complexity. One can recognise a Thioredoxin domain in the interval 101–229 (VTVIAALSLF…LVENVNALAA (129 aa)). Residues C150 and C153 each act as nucleophile in the active site. Cysteines 150 and 153 form a disulfide.

The protein belongs to the thioredoxin family. In terms of assembly, interacts in vitro with LTO1.

It localises to the plastid. The protein resides in the chloroplast thylakoid membrane. Thiol-disulfide oxidoreductase that participates in various redox reactions in the chloroplast. Mediates the reduction of PSI-N in the thylakoid lumen. May interact and probably reduce other target proteins of the thylakoid membrane, such as FTSH2, FTSH8, LHCB5, atpA, atpB, atpE, petA and petC. Involved in the biogenesis of the plastid cytochrome b6f complex. Reducing equivalents are provided by stromal M-type thioredoxins and probably transduced through the thylakoid membrane by CCDA. Possesses low insulin disulfide bonds reducing activity. In Arabidopsis thaliana (Mouse-ear cress), this protein is Thioredoxin-like protein HCF164, chloroplastic.